We begin with the raw amino-acid sequence, 625 residues long: RecQ-mediated genome instability protein 1 (625 aa).

The residue at position 1 (methionine 1) is an N-acetylmethionine. At serine 225 the chain carries Phosphoserine. A disordered region spans residues 257-282 (LTANNDTSSERCFTTGSSSNTIPTRQ). Serine 284 and serine 292 each carry phosphoserine. Residues lysine 334, lysine 387, and lysine 426 each participate in a glycyl lysine isopeptide (Lys-Gly) (interchain with G-Cter in SUMO2) cross-link.

It belongs to the RMI1 family. In terms of assembly, component of the RMI complex, containing at least TOP3A, RMI1 and RMI2. The RMI complex interacts with BLM. Directly interacts with RMI2 and TOP3A. May bind DHJ. Interacts (via N-terminal region) with BLM; the interaction is direct.

It is found in the nucleus. Its function is as follows. Essential component of the RMI complex, a complex that plays an important role in the processing of homologous recombination intermediates to limit DNA crossover formation in cells. Promotes TOP3A binding to double Holliday junctions (DHJ) and hence stimulates TOP3A-mediated dissolution. Required for BLM phosphorylation during mitosis. Within the BLM complex, required for BLM and TOP3A stability. The chain is RecQ-mediated genome instability protein 1 (RMI1) from Homo sapiens (Human).